Here is a 298-residue protein sequence, read N- to C-terminus: Protein DR_1172 (298 aa).

LEA-like repeat units lie at residues 48-117 (DAAQ…NVGQ), 128-197 (DQAK…DVAQ), and 201-270 (QGAQ…AGKQ). Residues 174-193 (VQDVKADASKAADQAKDKAQ) are compositionally biased toward basic and acidic residues. The disordered stretch occupies residues 174 to 298 (VQDVKADASK…MTGNTNTRKN (125 aa)). A compositionally biased stretch (low complexity) spans 194 to 208 (DVAQNVKQGAQQAAS). Basic and acidic residues predominate over residues 209-233 (DAKDKVQDVKADASRAADQAKDKAQ). Residues 275–298 (GSTTNNAGTAGNTGMTGNTNTRKN) are compositionally biased toward low complexity.

Belongs to the LEA type 1 family.

This Deinococcus radiodurans (strain ATCC 13939 / DSM 20539 / JCM 16871 / CCUG 27074 / LMG 4051 / NBRC 15346 / NCIMB 9279 / VKM B-1422 / R1) protein is Protein DR_1172.